A 1043-amino-acid chain; its full sequence is Constitutive coactivator of PPAR-gamma-like protein 1 homolog (1043 aa).

2 disordered regions span residues 353 to 497 (SMVP…HMQI) and 929 to 1043 (YGRG…NKEE). 2 stretches are compositionally biased toward polar residues: residues 362 to 375 (QMLNIPQGSVQSRP) and 405 to 419 (SPINPAQSGSPNHVD). 2 stretches are compositionally biased toward basic and acidic residues: residues 451-471 (TWDKGKKSEKANKKDSTEQAK) and 951-964 (EVAKELKTQSEDSK). Positions 801–1043 (VELATKVEKM…LEGAVANKEE (243 aa)) are RNA binding. Positions 995 to 1010 (EARASSNSESALSSDS) are enriched in low complexity.

Belongs to the constitutive coactivator of PPAR-gamma family.

The protein resides in the cytoplasm. It localises to the cell membrane. In terms of biological role, may bee involved in the oxidative stress-induced survival signaling. Binds RNA. May participate in mRNA transport in the cytoplasm. In Xenopus tropicalis (Western clawed frog), this protein is Constitutive coactivator of PPAR-gamma-like protein 1 homolog (fam120a).